A 173-amino-acid polypeptide reads, in one-letter code: Chromophore lyase CpcS/CpeS 3 (173 aa).

Belongs to the CpcS/CpeS biliprotein lyase family.

Its function is as follows. Covalently attaches a chromophore to Cys residue(s) of phycobiliproteins. The sequence is that of Chromophore lyase CpcS/CpeS 3 from Trichodesmium erythraeum (strain IMS101).